Reading from the N-terminus, the 143-residue chain is MTDLEIYRKRLERIEELLSELSEYSGRGAIIIVEGKRDVLSLKRLGIEGNFELATHQSLFNFSEKIARLGNEVVILTDWDRRGDILAIKLSGYFQSFGLKPELEIRNKLRLISQKEIKDVESLYTYVSKLRLKTGYCSKRDFQ.

Residues 28 to 109 form the Toprim domain; it reads GAIIIVEGKR…KPELEIRNKL (82 aa). Mg(2+) contacts are provided by Glu34, Asp78, and Asp80.

This sequence belongs to the UPF0292 family. The cofactor is Mg(2+).

The chain is UPF0292 protein Mbar_A0484 from Methanosarcina barkeri (strain Fusaro / DSM 804).